The primary structure comprises 666 residues: UvrABC system protein B (666 aa).

The region spanning 25–412 is the Helicase ATP-binding domain; that stretch reads EQVQAGAPYQ…EEQIVEQVIR (388 aa). ATP is bound at residue 38-45; it reads GATGTGKT. The Beta-hairpin motif lies at 91-114; it reads YYDYYQPEAYIPVTDTYIAKTASI. Residues 429–595 form the Helicase C-terminal domain; the sequence is QVDDLLAEIQ…PIIKRSSNAI (167 aa). The UVR domain maps to 626 to 661; that stretch reads PNLITQLEAQMKEAAKNLEFEEAAQYRDRIKKLRER.

Belongs to the UvrB family. In terms of assembly, forms a heterotetramer with UvrA during the search for lesions. Interacts with UvrC in an incision complex.

The protein localises to the cytoplasm. Functionally, the UvrABC repair system catalyzes the recognition and processing of DNA lesions. A damage recognition complex composed of 2 UvrA and 2 UvrB subunits scans DNA for abnormalities. Upon binding of the UvrA(2)B(2) complex to a putative damaged site, the DNA wraps around one UvrB monomer. DNA wrap is dependent on ATP binding by UvrB and probably causes local melting of the DNA helix, facilitating insertion of UvrB beta-hairpin between the DNA strands. Then UvrB probes one DNA strand for the presence of a lesion. If a lesion is found the UvrA subunits dissociate and the UvrB-DNA preincision complex is formed. This complex is subsequently bound by UvrC and the second UvrB is released. If no lesion is found, the DNA wraps around the other UvrB subunit that will check the other stand for damage. This Synechococcus sp. (strain ATCC 27144 / PCC 6301 / SAUG 1402/1) (Anacystis nidulans) protein is UvrABC system protein B.